The chain runs to 154 residues: 6,7-dimethyl-8-ribityllumazine synthase (154 aa).

5-amino-6-(D-ribitylamino)uracil-binding positions include F22, 56 to 58, and 81 to 83; these read SFE and VLI. 86–87 provides a ligand contact to (2S)-2-hydroxy-3-oxobutyl phosphate; the sequence is ET. Catalysis depends on H89, which acts as the Proton donor. F114 provides a ligand contact to 5-amino-6-(D-ribitylamino)uracil. Residue R128 participates in (2S)-2-hydroxy-3-oxobutyl phosphate binding.

The protein belongs to the DMRL synthase family.

It catalyses the reaction (2S)-2-hydroxy-3-oxobutyl phosphate + 5-amino-6-(D-ribitylamino)uracil = 6,7-dimethyl-8-(1-D-ribityl)lumazine + phosphate + 2 H2O + H(+). It participates in cofactor biosynthesis; riboflavin biosynthesis; riboflavin from 2-hydroxy-3-oxobutyl phosphate and 5-amino-6-(D-ribitylamino)uracil: step 1/2. In terms of biological role, catalyzes the formation of 6,7-dimethyl-8-ribityllumazine by condensation of 5-amino-6-(D-ribitylamino)uracil with 3,4-dihydroxy-2-butanone 4-phosphate. This is the penultimate step in the biosynthesis of riboflavin. The chain is 6,7-dimethyl-8-ribityllumazine synthase from Chlamydia caviae (strain ATCC VR-813 / DSM 19441 / 03DC25 / GPIC) (Chlamydophila caviae).